A 159-amino-acid polypeptide reads, in one-letter code: 18.0 kDa class I heat shock protein (159 aa).

A sHSP domain is found at E45–G159.

This sequence belongs to the small heat shock protein (HSP20) family. As to quaternary structure, forms oligomeric structures.

The protein localises to the cytoplasm. This chain is 18.0 kDa class I heat shock protein, found in Daucus carota (Wild carrot).